Consider the following 183-residue polypeptide: uncharacterized protein (183 aa).

A helical transmembrane segment spans residues 7 to 23; the sequence is LFFTALCFGLTGCIAPP.

The protein resides in the membrane. This is an uncharacterized protein from Haemophilus influenzae (strain ATCC 51907 / DSM 11121 / KW20 / Rd).